Consider the following 471-residue polypeptide: MLAHEIRARVARGEVSPLEVAQAYLKRVQELDPGLGAFLSLNERLLEEAEAVDPGLPLAGLVVAVKDNIATRGLRTTAGSRLLENFVPPYEATAVARLKALGALVLGKTNLDEFGMGSSTEHSAFFPTKNPFDPDRVPGGSSGGSAAALAADLAPLALGSDTGGSVRQPAAFCGVYGLKPTYGRVSRFGLIAYASSLDQIGPMARSVRDLALLMDAVAGPDPLDATSLDLPPRFQEALEGPLPPLRLGVVREALAGNSPGVERALEEALKVFRELGLSVREVSWPSLPQALAAYYILAPAEASSNLARYDGTLYGRRAEGEEVEGMMEATRALFGLEVKRRVLVGTFVLSSGYYEAYYGRAQAFRRRLKAEAQALFREVDLLLLPTTPHPAFPFGARRDPLAMYREDLYTVGANLTGLPALSFPAGFEGHLPVGLQLLAPWGEDERLLRAALAFEEATARAHLKAPLGEAL.

Residues Lys-66 and Ser-141 each act as charge relay system in the active site. The active-site Acyl-ester intermediate is Ser-165.

This sequence belongs to the amidase family. GatA subfamily. As to quaternary structure, heterotrimer of A, B and C subunits.

It catalyses the reaction L-glutamyl-tRNA(Gln) + L-glutamine + ATP + H2O = L-glutaminyl-tRNA(Gln) + L-glutamate + ADP + phosphate + H(+). Functionally, allows the formation of correctly charged Gln-tRNA(Gln) through the transamidation of misacylated Glu-tRNA(Gln) in organisms which lack glutaminyl-tRNA synthetase. The reaction takes place in the presence of glutamine and ATP through an activated gamma-phospho-Glu-tRNA(Gln). The sequence is that of Glutamyl-tRNA(Gln) amidotransferase subunit A from Thermus thermophilus (strain ATCC BAA-163 / DSM 7039 / HB27).